Reading from the N-terminus, the 678-residue chain is DNA ligase (678 aa).

NAD(+)-binding positions include 47-51, 96-97, and glutamate 122; these read DSDYD and SL. The active-site N6-AMP-lysine intermediate is the lysine 124. Residues arginine 145, glutamate 182, lysine 300, and lysine 324 each coordinate NAD(+). 4 residues coordinate Zn(2+): cysteine 418, cysteine 421, cysteine 436, and cysteine 442. Positions 602–678 constitute a BRCT domain; it reads AYNESFTGKT…ILEDNLKDLL (77 aa).

Belongs to the NAD-dependent DNA ligase family. LigA subfamily. Mg(2+) is required as a cofactor. It depends on Mn(2+) as a cofactor.

It catalyses the reaction NAD(+) + (deoxyribonucleotide)n-3'-hydroxyl + 5'-phospho-(deoxyribonucleotide)m = (deoxyribonucleotide)n+m + AMP + beta-nicotinamide D-nucleotide.. Functionally, DNA ligase that catalyzes the formation of phosphodiester linkages between 5'-phosphoryl and 3'-hydroxyl groups in double-stranded DNA using NAD as a coenzyme and as the energy source for the reaction. It is essential for DNA replication and repair of damaged DNA. The polypeptide is DNA ligase (Francisella tularensis subsp. novicida (strain U112)).